Consider the following 147-residue polypeptide: UPF0306 protein YhbP (147 aa).

The protein belongs to the UPF0306 family.

The protein is UPF0306 protein YhbP of Escherichia coli O8 (strain IAI1).